The chain runs to 270 residues: Large ribosomal subunit protein uL10 (270 aa).

Residues 234-270 are disordered; the sequence is VTELEAGKTRPKREGNRRQAMNGDEMDEDQSSDEDSD. Positions 238–250 are enriched in basic and acidic residues; the sequence is EAGKTRPKREGNR. Over residues 257 to 270 the composition is skewed to acidic residues; the sequence is DEMDEDQSSDEDSD.

The protein belongs to the universal ribosomal protein uL10 family. Associates with the pre-60S ribosomal particle.

The protein localises to the nucleus. It localises to the nucleolus. It is found in the cytoplasm. Its function is as follows. Component of the ribosome assembly machinery. Nuclear paralog of the ribosomal protein P0, it binds pre-60S subunits at an early stage of assembly in the nucleolus, and is replaced by P0 in cytoplasmic pre-60S subunits and mature 80S ribosomes. This Chaetomium thermophilum (strain DSM 1495 / CBS 144.50 / IMI 039719) (Thermochaetoides thermophila) protein is Large ribosomal subunit protein uL10.